We begin with the raw amino-acid sequence, 228 residues long: Heptaprenylglyceryl phosphate synthase (228 aa).

A sn-glycerol 1-phosphate-binding site is contributed by Lys-12. Residues Asp-14 and Thr-40 each contribute to the Mg(2+) site. Residues 159–164 (YLEYSG), Gly-189, and 209–210 (GN) each bind sn-glycerol 1-phosphate.

This sequence belongs to the GGGP/HepGP synthase family. Group I subfamily. As to quaternary structure, homodimer. The cofactor is Mg(2+).

The enzyme catalyses sn-glycerol 1-phosphate + all-trans-heptaprenyl diphosphate = 3-heptaprenyl-sn-glycero-1-phosphate + diphosphate. It participates in membrane lipid metabolism; glycerophospholipid metabolism. Functionally, prenyltransferase that catalyzes in vivo the transfer of the heptaprenyl moiety of heptaprenyl pyrophosphate (HepPP; 35 carbon atoms) to the C3 hydroxyl of sn-glycerol-1-phosphate (G1P), producing heptaprenylglyceryl phosphate (HepGP). This reaction is an ether-bond-formation step in the biosynthesis of archaea-type G1P-based membrane lipids found in Bacillales. This is Heptaprenylglyceryl phosphate synthase from Geobacillus sp. (strain WCH70).